A 295-amino-acid chain; its full sequence is Protein LplC (295 aa).

The next 6 membrane-spanning stretches (helical) occupy residues 21-41 (ILFL…IIAG), 81-101 (VSIF…FTMA), 116-136 (LNLV…YLVV), 142-162 (LDTY…LIII), 199-219 (VIAT…FHAL), and 260-280 (GIKL…YPFL). The ABC transmembrane type-1 domain occupies 79-280 (MGVSIFITVV…LPILAVYPFL (202 aa)).

The protein belongs to the binding-protein-dependent transport system permease family. CysTW subfamily.

It is found in the cell membrane. The protein is Protein LplC (lplC) of Bacillus subtilis (strain 168).